A 532-amino-acid polypeptide reads, in one-letter code: Phosphoenolpyruvate carboxykinase (ATP) (532 aa).

Positions 60, 194, and 200 each coordinate substrate. Residues K200, H219, and 237–245 (GLSGTGKTT) contribute to the ATP site. K200 and H219 together coordinate Mn(2+). Mn(2+) is bound at residue D258. ATP is bound by residues E286, R324, and T449. Substrate is bound at residue R324.

It belongs to the phosphoenolpyruvate carboxykinase (ATP) family. Mn(2+) serves as cofactor.

It localises to the cytoplasm. It carries out the reaction oxaloacetate + ATP = phosphoenolpyruvate + ADP + CO2. It functions in the pathway carbohydrate biosynthesis; gluconeogenesis. Involved in the gluconeogenesis. Catalyzes the conversion of oxaloacetate (OAA) to phosphoenolpyruvate (PEP) through direct phosphoryl transfer between the nucleoside triphosphate and OAA. This is Phosphoenolpyruvate carboxykinase (ATP) from Ruegeria sp. (strain TM1040) (Silicibacter sp.).